The chain runs to 398 residues: NADH-quinone oxidoreductase subunit D (398 aa).

Belongs to the complex I 49 kDa subunit family. In terms of assembly, NDH-1 is composed of 14 different subunits. Subunits NuoB, C, D, E, F, and G constitute the peripheral sector of the complex.

The protein resides in the cell inner membrane. The enzyme catalyses a quinone + NADH + 5 H(+)(in) = a quinol + NAD(+) + 4 H(+)(out). In terms of biological role, NDH-1 shuttles electrons from NADH, via FMN and iron-sulfur (Fe-S) centers, to quinones in the respiratory chain. The immediate electron acceptor for the enzyme in this species is believed to be ubiquinone. Couples the redox reaction to proton translocation (for every two electrons transferred, four hydrogen ions are translocated across the cytoplasmic membrane), and thus conserves the redox energy in a proton gradient. The polypeptide is NADH-quinone oxidoreductase subunit D (Bradyrhizobium sp. (strain BTAi1 / ATCC BAA-1182)).